The following is a 648-amino-acid chain: cAMP-dependent protein kinase catalytic subunit (648 aa).

Low complexity-rich tracts occupy residues 1–20 (MSNS…TINN), 46–67 (SGNN…NSSG), 136–175 (QQQP…PQQQ), and 232–254 (NTPS…NPHT). 4 disordered regions span residues 1–25 (MSNS…KVNV), 40–86 (GGGG…TKMD), 121–175 (KVPS…PQQQ), and 219–290 (QQQQ…DTNP). A compositionally biased stretch (polar residues) spans 255–290 (SGLSLQHAHSSYTPSNVLHSPTHFQSSLPTRLDTNP). Positions 336–590 (FKQIRVIGTG…ALDVKNHRWF (255 aa)) constitute a Protein kinase domain. Residues 342–350 (IGTGTFGKV) and Lys-365 contribute to the ATP site. Asp-459 serves as the catalytic Proton acceptor. Thr-490 is modified (phosphothreonine). Residues 591–648 (SDINWERLYQRRDNGPFIPKIQHQGDSSNFEMYDEEEMVEEPPSSNYVDPYAHLFKDF) form the AGC-kinase C-terminal domain.

This sequence belongs to the protein kinase superfamily. AGC Ser/Thr protein kinase family. cAMP subfamily. In terms of assembly, in Dictyostelium the holoenzyme is a dimer composed of a regulatory (R) and a catalytic (C) subunit. In the presence of cAMP it dissociates into the active C subunit and an R monomer.

It carries out the reaction L-seryl-[protein] + ATP = O-phospho-L-seryl-[protein] + ADP + H(+). It catalyses the reaction L-threonyl-[protein] + ATP = O-phospho-L-threonyl-[protein] + ADP + H(+). Functionally, essential for differentiation and fruit morphogenesis. This is cAMP-dependent protein kinase catalytic subunit (pkaC) from Dictyostelium discoideum (Social amoeba).